Reading from the N-terminus, the 225-residue chain is UPF0758 protein MADE_1000235 (225 aa).

Positions V102 to L224 constitute an MPN domain. 3 residues coordinate Zn(2+): H173, H175, and D186. Residues H173 to D186 carry the JAMM motif motif.

Belongs to the UPF0758 family.

The protein is UPF0758 protein MADE_1000235 of Alteromonas mediterranea (strain DSM 17117 / CIP 110805 / LMG 28347 / Deep ecotype).